We begin with the raw amino-acid sequence, 77 residues long: MNIMITKQFDRHLKYYTTIVKVFANGIILITAYYLVFELPVGYLIGLYIIMFVVWLLVSMFFLGRLLDFMAKMDLKK.

2 helical membrane passes run 22–42 and 44–64; these read VFAN…LPVG and LIGL…FFLG.

It localises to the cell membrane. This is an uncharacterized protein from Methanocaldococcus jannaschii (strain ATCC 43067 / DSM 2661 / JAL-1 / JCM 10045 / NBRC 100440) (Methanococcus jannaschii).